Reading from the N-terminus, the 213-residue chain is Octanoyltransferase (213 aa).

Residues 28 to 203 (GTSPETLLLL…RFPFLLDERL (176 aa)) form the BPL/LPL catalytic domain. Substrate contacts are provided by residues 66-73 (RGGDVTFH), 133-135 (SIG), and 146-148 (GFA). The active-site Acyl-thioester intermediate is the Cys-164.

It belongs to the LipB family.

Its subcellular location is the cytoplasm. It carries out the reaction octanoyl-[ACP] + L-lysyl-[protein] = N(6)-octanoyl-L-lysyl-[protein] + holo-[ACP] + H(+). The protein operates within protein modification; protein lipoylation via endogenous pathway; protein N(6)-(lipoyl)lysine from octanoyl-[acyl-carrier-protein]: step 1/2. Catalyzes the transfer of endogenously produced octanoic acid from octanoyl-acyl-carrier-protein onto the lipoyl domains of lipoate-dependent enzymes. Lipoyl-ACP can also act as a substrate although octanoyl-ACP is likely to be the physiological substrate. The chain is Octanoyltransferase from Geobacter metallireducens (strain ATCC 53774 / DSM 7210 / GS-15).